A 388-amino-acid polypeptide reads, in one-letter code: Probable proton-coupled zinc antiporter SLC30A3 (388 aa).

Polar residues predominate over residues 1–13; sequence MEPSPTTGGSETT. Disordered regions lie at residues 1–30 and 35–54; these read MEPS…GLRL and TEAP…SFHH. Over 1 to 75 the chain is Cytoplasmic; that stretch reads MEPSPTTGGS…TPERMQAQRQ (75 aa). The helical transmembrane segment at 76–96 threads the bilayer; the sequence is LCTACAVCCVFMAGEVVGGYL. At 97-105 the chain is on the lumenal side; it reads AHSLAIMTD. The chain crosses the membrane as a helical span at residues 106–126; the sequence is AAHLLADVGSMMGSLFSLWLS. The Zn(2+) site is built by H108 and D112. Over 127-145 the chain is Cytoplasmic; sequence TRPATRTMTFGWHRSETLG. A helical transmembrane segment spans residues 146-166; that stretch reads ALASVVSLWMVTGILLYLAFI. The Lumenal segment spans residues 167–177; sequence RLLHSDYHIEG. The chain crosses the membrane as a helical span at residues 178–198; sequence GAMLLTASIAVCANLLMAFVL. Residues 199–235 are Cytoplasmic-facing; it reads HQAGPPHSHGSRGAEYAPLEEGSGEPLPLGNTSVRAA. The helical transmembrane segment at 236–256 threads the bilayer; the sequence is FVHVLGDLLQSLGVLIASILI. Positions 238 and 242 each coordinate Zn(2+). Topologically, residues 257 to 264 are lumenal; that stretch reads YFKPQYKA. The chain crosses the membrane as a helical span at residues 265–285; the sequence is ADPISTFLFSICALGSTAPTL. The Cytoplasmic portion of the chain corresponds to 286–388; the sequence is RDVLRVLMEG…CLRCQEPPQA (103 aa).

This sequence belongs to the cation diffusion facilitator (CDF) transporter (TC 2.A.4) family. SLC30A subfamily. As to quaternary structure, homodimer. Homodimerization could regulate efficiency of zinc transport. Interacts with TMEM163.

It is found in the cytoplasmic vesicle. The protein resides in the secretory vesicle. The protein localises to the synaptic vesicle membrane. Its subcellular location is the synapse. It localises to the synaptosome. It is found in the late endosome membrane. The protein resides in the lysosome membrane. It catalyses the reaction Zn(2+)(in) + 2 H(+)(out) = Zn(2+)(out) + 2 H(+)(in). Probable proton-coupled zinc ion antiporter mediating the import of zinc from cytoplasm into synaptic vesicles and participating to cellular zinc ion homeostasis in the brain. The protein is Probable proton-coupled zinc antiporter SLC30A3 of Bos taurus (Bovine).